Consider the following 606-residue polypeptide: WD repeat-containing protein 1 (606 aa).

13 WD repeats span residues 4–45 (EIKK…LRNI), 48–87 (PAVADIYTEHAHQVVVAKYAPSGFYIASGDISGKLRIWDT), 93–135 (ILKY…LWDT), 138–176 (SVGEITGHNKVINSVDIKQNRPYRLATGSDDNCAAFFEG), 180–218 (KFKFTIGDHSRFVNCVRFSPDGNRFATASADGQIFIYDG), 224–263 (VCALGGSKAHDGGIYAISWSPDSTHLLSASGDKTSKIWDV), 270–306 (STFPMGSNVLDQQLGCLWQKDHLLSISLSGYINYLDK), 311–351 (KPLR…YWDS), 358–408 (SFSG…KLDV), 432–474 (LKDQ…VYSI), 480–518 (KDEGKLLEAKGPVTDLAYSHDGAFLAVCDASKVVTVFSV), 523–561 (SENNVFYGHHAKIVCLAWSPDNEHFASGGMDMMVYVWTL), and 566–604 (TKVKIQDAHRLHHVSSLAWLDEHTLVTTSHDASVKEWTI). Lys28, Lys81, Lys95, and Lys115 each carry N6-acetyllysine. Tyr238 carries the phosphotyrosine modification. Lys480 bears the N6-acetyllysine mark.

The protein belongs to the WD repeat AIP1 family.

Its subcellular location is the cytoplasm. The protein localises to the cytoskeleton. The protein resides in the cell projection. It is found in the podosome. Induces disassembly of actin filaments in conjunction with ADF/cofilin family proteins. Enhances cofilin-mediated actin severing. Involved in cytokinesis. Involved in chemotactic cell migration by restricting lamellipodial membrane protrusions. Involved in myocardium sarcomere organization. Required for cardiomyocyte growth and maintenance. Involved in megakaryocyte maturation and platelet shedding. Required for the establishment of planar cell polarity (PCP) during follicular epithelium development and for cell shape changes during PCP; the function seems to implicate cooperation with CFL1 and/or DSTN/ADF. Involved in the generation/maintenance of cortical tension. Involved in assembly and maintenance of epithelial apical cell junctions and plays a role in the organization of the perijunctional actomyosin belt. The chain is WD repeat-containing protein 1 (Wdr1) from Rattus norvegicus (Rat).